A 643-amino-acid polypeptide reads, in one-letter code: Threonine--tRNA ligase (643 aa).

A TGS domain is found at 3–64; the sequence is DVVKITFPDG…EEDGAISIIT (62 aa). Positions 245–542 are catalytic; the sequence is DHRKLGKELD…LIEEYKGAFP (298 aa). The Zn(2+) site is built by Cys338, His389, and His519.

The protein belongs to the class-II aminoacyl-tRNA synthetase family. In terms of assembly, homodimer. The cofactor is Zn(2+).

It localises to the cytoplasm. It catalyses the reaction tRNA(Thr) + L-threonine + ATP = L-threonyl-tRNA(Thr) + AMP + diphosphate + H(+). Catalyzes the attachment of threonine to tRNA(Thr) in a two-step reaction: L-threonine is first activated by ATP to form Thr-AMP and then transferred to the acceptor end of tRNA(Thr). Also edits incorrectly charged L-seryl-tRNA(Thr). This is Threonine--tRNA ligase from Anoxybacillus flavithermus (strain DSM 21510 / WK1).